A 166-amino-acid polypeptide reads, in one-letter code: Large ribosomal subunit protein uL10 (166 aa).

This sequence belongs to the universal ribosomal protein uL10 family. Part of the ribosomal stalk of the 50S ribosomal subunit. The N-terminus interacts with L11 and the large rRNA to form the base of the stalk. The C-terminus forms an elongated spine to which L12 dimers bind in a sequential fashion forming a multimeric L10(L12)X complex.

Its function is as follows. Forms part of the ribosomal stalk, playing a central role in the interaction of the ribosome with GTP-bound translation factors. The polypeptide is Large ribosomal subunit protein uL10 (Streptococcus gordonii (strain Challis / ATCC 35105 / BCRC 15272 / CH1 / DL1 / V288)).